The primary structure comprises 252 residues: MSLTGLPDIRKKIGQFHHLRIYKQILSLQGNFARLNYFLGDVFPANLRSASVSVFFEVRLGPRIPDCIVLLKSVDAKDEFAFHCYFFEFKTTLGKSTMQSVHHNCIHQAQYLQGLRQLHQSISFLDQYLIADEVLWNVVPVICFFRQWGLKLDFFKKFSGKTKRLSFSFICDLFARSQDGAVQSLLSIPNYTNFRRACQKHTDLYRRRYQKASKSVLTKTSGENRSRASRQVAKNAPKNRIRRTAKKDAKRQ.

Residues 211-252 (KASKSVLTKTSGENRSRASRQVAKNAPKNRIRRTAKKDAKRQ) are disordered. Residues 212–223 (ASKSVLTKTSGE) are compositionally biased toward polar residues. Basic residues predominate over residues 237-252 (PKNRIRRTAKKDAKRQ).

This sequence belongs to the herpesviridae UL24 family.

Its subcellular location is the virion. The protein localises to the host cytoplasm. It localises to the host nucleus. The protein resides in the host nucleolus. It is found in the host Golgi apparatus. Its function is as follows. May participate in nuclear egress of viral particles. Plays a role in the dispersal of several host nucleolar proteins including NCL/nucleolin and NPM1. Since deletion of host NCL/nucleolin negatively impact on nuclear egress, UL24 supposedly acts on this process through its effect on host nucleoli. The sequence is that of Protein UL24 homolog (U49) from Homo sapiens (Human).